The primary structure comprises 115 residues: Pycsar effector protein TpPycTM (115 aa).

The next 2 helical transmembrane spans lie at 44–64 (IGNL…YATN) and 74–94 (VWNI…VILV).

Its subcellular location is the cell inner membrane. Functionally, pycsar (pyrimidine cyclase system for antiphage resistance) provides immunity against bacteriophage. The pyrimidine cyclase (PycC) synthesizes cyclic nucleotides in response to infection; these serve as specific second messenger signals. The signals activate the adjacent effector, leading to bacterial cell death and abortive phage infection. A clade C Pycsar system. Its function is as follows. The effector gene of a two-gene Pycsar system. Expression of this and adjacent uridylate cyclase TpPycC (AC A0A1T4LJ54) probably confers resistance to bacteriophage. The genes are probably only expressed in response to bacteriophage infection. Probably only responds to cUMP (produced by its cognate NTP cyclase), acts by impairing membrane integrity. The polypeptide is Pycsar effector protein TpPycTM (Treponema porcinum).